The sequence spans 449 residues: MEKVWLEAQSNIKKVLTPQTYNTWIKPIRFHTLTDDNLTLEVPSKFIKEWVTEKYLPMIVEAISSLTSVKYQIEFKITEKIPLESKPVDNFTPVIKDNEPSKETNKNIDITANLNPKYTFDSFVCGASNQFAHAASQAVASNPASNYNPLFIYGGVGLGKTHLLIAIGNHIKENNKKAKICYYSSEKFMNEMINCLRYKKMDEFRNKFRKMDILLIDDIQFMAGKEATQEEFFHTFNALYESHKQIVVTSDKFPKDIPGLEERLRSRFEWGLIADIQPPDIETKIAILKKKSDLNSITLPNDVALFLASSATSNVRELEGMLIRLGAYASLTGSEITLNMARDILKDIIVEKTKDITVEMIQKHVAEHFKIKVSELKSDKRLKTFVVPRQIAIFICRELTKSSYPEIGEKFGGKDHSTIIHSVKKIEKQMANDLEIKNIVENLKKELIT.

The segment at 1-69 is domain I, interacts with DnaA modulators; the sequence is MEKVWLEAQS…VEAISSLTSV (69 aa). The tract at residues 69–112 is domain II; it reads VKYQIEFKITEKIPLESKPVDNFTPVIKDNEPSKETNKNIDITA. Positions 113–329 are domain III, AAA+ region; sequence NLNPKYTFDS…GMLIRLGAYA (217 aa). The ATP site is built by Gly157, Gly159, Lys160, and Thr161. The interval 330–449 is domain IV, binds dsDNA; it reads SLTGSEITLN…VENLKKELIT (120 aa).

The protein belongs to the DnaA family. Oligomerizes as a right-handed, spiral filament on DNA at oriC.

Its subcellular location is the cytoplasm. Its function is as follows. Plays an essential role in the initiation and regulation of chromosomal replication. ATP-DnaA binds to the origin of replication (oriC) to initiate formation of the DNA replication initiation complex once per cell cycle. Binds the DnaA box (a 9 base pair repeat at the origin) and separates the double-stranded (ds)DNA. Forms a right-handed helical filament on oriC DNA; dsDNA binds to the exterior of the filament while single-stranded (ss)DNA is stabiized in the filament's interior. The ATP-DnaA-oriC complex binds and stabilizes one strand of the AT-rich DNA unwinding element (DUE), permitting loading of DNA polymerase. After initiation quickly degrades to an ADP-DnaA complex that is not apt for DNA replication. Binds acidic phospholipids. The protein is Chromosomal replication initiator protein DnaA of Geotalea uraniireducens (strain Rf4) (Geobacter uraniireducens).